The chain runs to 406 residues: Tryptophan synthase beta chain (406 aa).

Lys99 is modified (N6-(pyridoxal phosphate)lysine).

This sequence belongs to the TrpB family. Tetramer of two alpha and two beta chains. It depends on pyridoxal 5'-phosphate as a cofactor.

The enzyme catalyses (1S,2R)-1-C-(indol-3-yl)glycerol 3-phosphate + L-serine = D-glyceraldehyde 3-phosphate + L-tryptophan + H2O. The protein operates within amino-acid biosynthesis; L-tryptophan biosynthesis; L-tryptophan from chorismate: step 5/5. The beta subunit is responsible for the synthesis of L-tryptophan from indole and L-serine. In Rhizobium leguminosarum bv. trifolii (strain WSM2304), this protein is Tryptophan synthase beta chain.